Reading from the N-terminus, the 507-residue chain is Cobyric acid synthase (507 aa).

The 203-residue stretch at 249-451 folds into the GATase cobBQ-type domain; that stretch reads DIEIAVINLP…IHGIFENREF (203 aa). Catalysis depends on Cys-330, which acts as the Nucleophile. His-443 is a catalytic residue.

Belongs to the CobB/CobQ family. CobQ subfamily.

Its pathway is cofactor biosynthesis; adenosylcobalamin biosynthesis. Its function is as follows. Catalyzes amidations at positions B, D, E, and G on adenosylcobyrinic A,C-diamide. NH(2) groups are provided by glutamine, and one molecule of ATP is hydrogenolyzed for each amidation. This Thermoanaerobacter sp. (strain X514) protein is Cobyric acid synthase.